We begin with the raw amino-acid sequence, 213 residues long: A-type ATP synthase subunit D (213 aa).

Belongs to the V-ATPase D subunit family. Has multiple subunits with at least A(3), B(3), C, D, E, F, H, I and proteolipid K(x).

The protein resides in the cell membrane. Functionally, component of the A-type ATP synthase that produces ATP from ADP in the presence of a proton gradient across the membrane. In Saccharolobus islandicus (strain Y.N.15.51 / Yellowstone #2) (Sulfolobus islandicus), this protein is A-type ATP synthase subunit D.